Consider the following 450-residue polypeptide: Keratin, type I cytoskeletal 25 (450 aa).

The segment covering 1–11 (MSLRLSSASRR) has biased composition (low complexity). The interval 1 to 20 (MSLRLSSASRRSCPRPTTGS) is disordered. A head region spans residues 1–78 (MSLRLSSASR…VNERGLLSGN (78 aa)). A coil 1A region spans residues 79 to 114 (EKVTMQNLNDRLASYLDSVHALEEANADLEQKIKGW). An IF rod domain is found at 79–394 (EKVTMQNLND…LLIGGDDGAC (316 aa)). The tract at residues 115 to 136 (YEKFGPGSCRGLDHDYSRYFPI) is linker 1. The interval 137-228 (IDDLKNQIIA…KNHKEEMQVL (92 aa)) is coil 1B. The interval 229-251 (QCAAGGNVNVEMNAAPGVDLTVL) is linker 12. Residues 252–390 (LNNMRAEYEA…ETYCLLIGGD (139 aa)) are coil 2. Residues 391-450 (DGACKSGGYKSKDYGSGNVGSQVKDPAKAIVVKKVLEEVDQRSKILTTRLHSLEEKSQSN) are tail. Residue Ser-442 is modified to Phosphoserine.

Belongs to the intermediate filament family. Heterodimer of a type I and a type II keratin. Heterodimer with type II keratin KRT5 leading to the formation of keratin intermediate filament (KIF) network. Interacts with KRT6A to form filaments. As to expression, strongly expressed in skin and scalp, and weak expression observed in thymus and tongue. In the hair follicle, expressed in Henle layer, Huxley layer and in the inner root sheath cuticle of the hair follicle. Expression extends from the bulb region up to the point of differentiation into the three layers. Also present in the medulla of beard hair (at protein level).

It is found in the cytoplasm. Essential for the proper assembly of type I and type II keratin protein complexes and formation of keratin intermediate filaments in the inner root sheath (irs). Plays a role in the cytoskeleton organization. The polypeptide is Keratin, type I cytoskeletal 25 (Homo sapiens (Human)).